The sequence spans 295 residues: Ribose-phosphate pyrophosphokinase (295 aa).

ATP is bound by residues 46–48 (DGE) and 101–102 (RQ). The Mg(2+) site is built by histidine 132 and aspartate 171. Lysine 194 is an active-site residue. Positions 196 and 220 each coordinate D-ribose 5-phosphate.

The protein belongs to the ribose-phosphate pyrophosphokinase family. Class III (archaeal) subfamily. Mg(2+) serves as cofactor.

It is found in the cytoplasm. The catalysed reaction is D-ribose 5-phosphate + ATP = 5-phospho-alpha-D-ribose 1-diphosphate + AMP + H(+). Its pathway is metabolic intermediate biosynthesis; 5-phospho-alpha-D-ribose 1-diphosphate biosynthesis; 5-phospho-alpha-D-ribose 1-diphosphate from D-ribose 5-phosphate (route I): step 1/1. Involved in the biosynthesis of the central metabolite phospho-alpha-D-ribosyl-1-pyrophosphate (PRPP) via the transfer of pyrophosphoryl group from ATP to 1-hydroxyl of ribose-5-phosphate (Rib-5-P). This is Ribose-phosphate pyrophosphokinase from Methanosarcina mazei (strain ATCC BAA-159 / DSM 3647 / Goe1 / Go1 / JCM 11833 / OCM 88) (Methanosarcina frisia).